A 1291-amino-acid chain; its full sequence is GRB10-interacting GYF protein 2 (1291 aa).

At A2 the chain carries N-acetylalanine. 3 positions are modified to phosphoserine: S19, S26, and S30. Omega-N-methylarginine is present on residues R107, R119, and R121. The disordered stretch occupies residues 112–132; the sequence is GTVVGAPRGRSSSRGRGRGRG. A Phosphoserine modification is found at S140. 3 disordered regions span residues 148-196, 209-248, and 267-484; these read FGRG…RKHE, REEQNGEDEDGGWRLAGSRRDGERWRPHSPDGPRSTGWRE, and RGYR…TEPD. Residue R150 is modified to Omega-N-methylarginine. Positions 152–183 are enriched in basic and acidic residues; sequence GGREMHRSQSWEERGDRRFEKPGRKDVGRPNF. S161, S190, and S237 each carry phosphoserine. Basic and acidic residues predominate over residues 226 to 248; sequence SRRDGERWRPHSPDGPRSTGWRE. The DDX6 binding motif motif lies at 281 to 311; sequence DDRDSLPEWCLEDAEEEMGTFDSSGAFLSLK. A compositionally biased stretch (acidic residues) spans 290–299; it reads CLEDAEEEMG. Residues 313-364 are compositionally biased toward basic and acidic residues; it reads VQKEPIPEEQEMDFRPVEEGEERSDSDSSHNEEAKEPDKTNRREGEKTDRAG. The segment covering 371–393 has biased composition (polar residues); the sequence is VPQTSLSSARPGTPSDHQPQEAT. T383 is subject to Phosphothreonine. Residues 394–415 are compositionally biased toward basic and acidic residues; sequence QFERKDEPKAEQVEKAEEENRS. Residues 534–582 form the GYF domain; the sequence is MQKWYYKDPQGEIQGPFNNQEMAEWFQAGYFTMSLLVKRACDESFQPLG. Positions 548–564 are required for GRB10-binding; that stretch reads GPFNNQEMAEWFQAGYF. Position 594 is a phosphoserine (S594). Disordered stretches follow at residues 732 to 794, 846 to 937, 958 to 998, 1011 to 1053, and 1090 to 1118; these read KAKA…QEEA, EEAA…SNTA, ERQL…SKPA, EARQ…SVWG, and KEVGPRNSTNKNKNNASLSKSVGVSNRQN. Residues 846 to 898 show a composition bias toward basic and acidic residues; that stretch reads EEAAKWAREEEEAQRRLEENRLRMEEEAARLRHEEEERKRKELELQRQKDLMR. The span at 899 to 924 shows a compositional bias: low complexity; the sequence is QRQQQQEALRRLQQQQQQQQLAQMKL. The segment covering 925–937 has biased composition (polar residues); that stretch reads PSSSTWGQQSNTA. Positions 958-973 are enriched in basic and acidic residues; sequence ERQLREEQRRQQRELM. Positions 977 to 986 are enriched in low complexity; it reads QQQQQQQQQQ. S995 carries the post-translational modification Phosphoserine. Over residues 1015–1031 the composition is skewed to low complexity; it reads MQKQQQQQQQQQQQHQQ. The segment covering 1032–1053 has biased composition (polar residues); it reads SNRARNSTHSNLHTSLGNSVWG. Residues 1096-1110 show a composition bias toward low complexity; sequence NSTNKNKNNASLSKS. K1129 participates in a covalent cross-link: Glycyl lysine isopeptide (Lys-Gly) (interchain with G-Cter in SUMO2). Disordered regions lie at residues 1202–1223 and 1239–1263; these read AKQKVNQQRQQQQQQQQQQDSV and QSNNQQSNFEAVQSGKKKKKQKMVR. The segment covering 1208 to 1220 has biased composition (low complexity); it reads QQRQQQQQQQQQQ. S1276 carries the phosphoserine modification.

The protein belongs to the GIGYF family. Component of the 4EHP-GYF2 complex, at least composed of EIF4E2, GIGYF2 and ZNF598. Interacts (via the 4EHP-binding motif) with EIF4E2; the interaction is direct. Interacts with ZFP36/TTP (via P-P-P-P-G repeats); the interaction is direct. Interacts with GRB10. Interacts (via DDX6 motif) with DDX6 (via RecA-like domain 2). As to expression, expressed in heart, liver, kidney and brain as well as in testis.

Key component of the 4EHP-GYF2 complex, a multiprotein complex that acts as a repressor of translation initiation. In the 4EHP-GYF2 complex, acts as a factor that bridges EIF4E2 to ZFP36/TTP, linking translation repression with mRNA decay. Also recruits and bridges the association of the 4EHP complex with the decapping effector protein DDX6, which is required for the ZFP36/TTP-mediated down-regulation of AU-rich mRNA. May act cooperatively with GRB10 to regulate tyrosine kinase receptor signaling, including IGF1 and insulin receptors. In association with EIF4E2, assists ribosome-associated quality control (RQC) by sequestering the mRNA cap, blocking ribosome initiation and decreasing the translational load on problematic messages. Part of a pathway that works in parallel to RQC-mediated degradation of the stalled nascent polypeptide. GIGYF2 and EIF4E2 work downstream and independently of ZNF598, which seems to work as a scaffold that can recruit them to faulty mRNA even if alternative recruitment mechanisms may exist. This chain is GRB10-interacting GYF protein 2, found in Mus musculus (Mouse).